A 438-amino-acid chain; its full sequence is Aflatoxin cluster transcriptional coactivator aflS (438 aa).

Positions 65 to 134 (LALYNQLLAC…PSPGHVAHSV (70 aa)) constitute an HTH iclR-type domain. Positions 95 to 114 (FEDVADIAGVPECRLRRLVR) form a DNA-binding region, H-T-H motif.

As to quaternary structure, interacts with aflR.

It is found in the nucleus. The protein resides in the endosome. In terms of biological role, transcription coactivator involved in regulation of the aflatoxin biosynthesis gene cluster with aflR. The ratio of the expression data between aflS:aflR plays a crucial role in the regulation of aflatoxins production. A high ratio, produced at a range between 17 and 30 degrees Celsius, corresponds with the production profile of aflatoxin G1 biosynthesis. A low ratio, produced over 30 degrees Celsius, is related to aflatoxin B1 biosynthesis. AflJ may act in aflR transport to or from the nucleus, thus controlling the availability of aflR for transcriptional activation of aflatoxin biosynthesis cluster genes. AflJ may also assist in directing endosomes to the cytoplasmic membrane for aflatoxin export. The polypeptide is Aflatoxin cluster transcriptional coactivator aflS (Aspergillus parasiticus (strain ATCC 56775 / NRRL 5862 / SRRC 143 / SU-1)).